Consider the following 300-residue polypeptide: F-box protein PP2-A15 (300 aa).

One can recognise an F-box domain in the interval 17–63 (MGPGLGDIPESCVACVFMYLTPPEICNLAGLNRSFRGAASSDSVWEK).

This chain is F-box protein PP2-A15 (PP2A15), found in Arabidopsis thaliana (Mouse-ear cress).